The primary structure comprises 575 residues: Intermediate filament protein ifd-1 (575 aa).

A head region spans residues 1–56 (MSKLNPRVAHNPVLSRIIESGRTNLPSGITSAGSLSAYAQAAAVTIRDNRDREKRE). In terms of domain architecture, IF rod spans 53-406 (EKREIADLNN…KLMEQAENLR (354 aa)). The segment at 57–88 (IADLNNRLARYVEKVRFLEAQNRVLENDIGLF) is coil 1A. The interval 89–102 (RQAAHIHTGKVRDY) is linker 1. A coil 1B region spans residues 103 to 240 (YDAEKTSLAT…STHEIAIREE (138 aa)). The tract at residues 241-258 (INKARRDSTDKNREFFHR) is linker 12. Residues 259-408 (ELHMSMKEIR…MEQAENLRTS (150 aa)) form a coil 2 region. The interval 409–572 (YQSDFVIDTP…DEVGWYAHVS (164 aa)) is tail. Positions 459–575 (NTQQFRSYGK…GWYAHVSYSH (117 aa)) constitute an LTD domain.

Belongs to the intermediate filament family.

Its subcellular location is the cytoplasm. Functionally, cytoplasmic intermediate filaments provide mechanical strength to cells. Not essential protein. The protein is Intermediate filament protein ifd-1 of Caenorhabditis elegans.